We begin with the raw amino-acid sequence, 304 residues long: Light-independent protochlorophyllide reductase iron-sulfur ATP-binding protein (304 aa).

ATP is bound by residues 46 to 51 and K75; that span reads GIGKST. S50 contributes to the Mg(2+) binding site. 2 residues coordinate [4Fe-4S] cluster: C131 and C165. ATP is bound by residues 216-217 and 240-242; these read NR and PDL.

It belongs to the NifH/BchL/ChlL family. As to quaternary structure, homodimer. Protochlorophyllide reductase is composed of three subunits; BchL, BchN and BchB. Requires [4Fe-4S] cluster as cofactor.

The catalysed reaction is chlorophyllide a + oxidized 2[4Fe-4S]-[ferredoxin] + 2 ADP + 2 phosphate = protochlorophyllide a + reduced 2[4Fe-4S]-[ferredoxin] + 2 ATP + 2 H2O. Its pathway is porphyrin-containing compound metabolism; bacteriochlorophyll biosynthesis (light-independent). In terms of biological role, component of the dark-operative protochlorophyllide reductase (DPOR) that uses Mg-ATP and reduced ferredoxin to reduce ring D of protochlorophyllide (Pchlide) to form chlorophyllide a (Chlide). This reaction is light-independent. The L component serves as a unique electron donor to the NB-component of the complex, and binds Mg-ATP. This chain is Light-independent protochlorophyllide reductase iron-sulfur ATP-binding protein, found in Rhodobacter capsulatus (strain ATCC BAA-309 / NBRC 16581 / SB1003).